A 538-amino-acid polypeptide reads, in one-letter code: Putative cysteine ligase BshC (538 aa).

Positions 421 to 485 (VEEKFQEAKK…LERRHEVELN (65 aa)) form a coiled coil.

The protein belongs to the BshC family.

Involved in bacillithiol (BSH) biosynthesis. May catalyze the last step of the pathway, the addition of cysteine to glucosamine malate (GlcN-Mal) to generate BSH. The sequence is that of Putative cysteine ligase BshC from Bacillus cytotoxicus (strain DSM 22905 / CIP 110041 / 391-98 / NVH 391-98).